The sequence spans 487 residues: NADH-quinone oxidoreductase subunit N (487 aa).

The next 14 helical transmembrane spans lie at 8 to 28 (LIAM…MLSI), 35 to 55 (FINA…LYFV), 78 to 98 (GLVI…LVGY), 104 to 124 (EFYL…SANH), 125 to 145 (LASL…LIGY), 159 to 179 (YMLL…LLYA), 203 to 223 (ILAG…LVPF), 235 to 255 (PAPV…AVVM), 271 to 291 (LVLS…AISQ), 297 to 317 (LLGY…VAVQ), 328 to 348 (IGVY…VVSL), 376 to 396 (AVMT…GFIG), 409 to 428 (LWWL…YYYL), and 451 to 471 (ALTA…VLGI).

This sequence belongs to the complex I subunit 2 family. As to quaternary structure, NDH-1 is composed of 13 different subunits. Subunits NuoA, H, J, K, L, M, N constitute the membrane sector of the complex.

The protein resides in the cell inner membrane. It carries out the reaction a quinone + NADH + 5 H(+)(in) = a quinol + NAD(+) + 4 H(+)(out). NDH-1 shuttles electrons from NADH, via FMN and iron-sulfur (Fe-S) centers, to quinones in the respiratory chain. The immediate electron acceptor for the enzyme in this species is believed to be ubiquinone. Couples the redox reaction to proton translocation (for every two electrons transferred, four hydrogen ions are translocated across the cytoplasmic membrane), and thus conserves the redox energy in a proton gradient. This chain is NADH-quinone oxidoreductase subunit N, found in Yersinia pestis bv. Antiqua (strain Angola).